A 162-amino-acid chain; its full sequence is Endoribonuclease YbeY (162 aa).

Residues H127, H131, and H137 each contribute to the Zn(2+) site.

It belongs to the endoribonuclease YbeY family. The cofactor is Zn(2+).

Its subcellular location is the cytoplasm. In terms of biological role, single strand-specific metallo-endoribonuclease involved in late-stage 70S ribosome quality control and in maturation of the 3' terminus of the 16S rRNA. The sequence is that of Endoribonuclease YbeY from Acetivibrio thermocellus (strain ATCC 27405 / DSM 1237 / JCM 9322 / NBRC 103400 / NCIMB 10682 / NRRL B-4536 / VPI 7372) (Clostridium thermocellum).